The primary structure comprises 149 residues: MARPRKEAPQRNLDRDENARQQPTEEPQDEAPRNQGRQQQQQRPPAAPRRPRRFRPGTVALREIRRIQRSNVPLIPHSPFMRLVRELAAEFLDDCRFAAETFIMLKEVVEDELVNHFGNVQICSIHAKRIIITVKDFKLAKLLKGEPED.

Over residues 1–19 (MARPRKEAPQRNLDRDENA) the composition is skewed to basic and acidic residues. Positions 1–58 (MARPRKEAPQRNLDRDENARQQPTEEPQDEAPRNQGRQQQQQRPPAAPRRPRRFRPGT) are disordered. A compositionally biased stretch (low complexity) spans 33-44 (RNQGRQQQQQRP).

The protein belongs to the histone H3 family. In terms of assembly, the nucleosome is a histone octamer containing two molecules each of H2A, H2B, H3 and H4 assembled in one H3-H4 heterotetramer and two H2A-H2B heterodimers. The octamer wraps approximately 147 bp of DNA. In terms of tissue distribution, pollen specific.

Its subcellular location is the nucleus. The protein localises to the chromosome. Core component of nucleosome. Nucleosomes wrap and compact DNA into chromatin, limiting DNA accessibility to the cellular machineries which require DNA as a template. Histones thereby play a central role in transcription regulation, DNA repair, DNA replication and chromosomal stability. DNA accessibility is regulated via a complex set of post-translational modifications of histones, also called histone code, and nucleosome remodeling. The chain is Histone H3-like 1 (gH3) from Lilium longiflorum (Trumpet lily).